Here is a 77-residue protein sequence, read N- to C-terminus: Large ribosomal subunit protein uL24 (77 aa).

The protein belongs to the universal ribosomal protein uL24 family. In terms of assembly, part of the 50S ribosomal subunit.

Its function is as follows. One of two assembly initiator proteins, it binds directly to the 5'-end of the 23S rRNA, where it nucleates assembly of the 50S subunit. Functionally, one of the proteins that surrounds the polypeptide exit tunnel on the outside of the subunit. This chain is Large ribosomal subunit protein uL24, found in Campylobacter jejuni subsp. jejuni serotype O:6 (strain 81116 / NCTC 11828).